The sequence spans 156 residues: Arginine repressor (156 aa).

This sequence belongs to the ArgR family.

It is found in the cytoplasm. It functions in the pathway amino-acid biosynthesis; L-arginine biosynthesis [regulation]. In terms of biological role, regulates arginine biosynthesis genes. This Photobacterium profundum (strain SS9) protein is Arginine repressor.